Reading from the N-terminus, the 610-residue chain is Fimbrin (610 aa).

EF-hand domains are found at residues serine 7–lysine 42 and valine 43–histidine 78. Aspartate 20, asparagine 22, aspartate 24, glutamine 26, glutamate 31, aspartate 56, aspartate 58, asparagine 60, serine 62, and glutamate 67 together coordinate Ca(2+). Actin-binding stretches follow at residues tyrosine 102–proline 365 and alanine 366–methionine 608. 4 Calponin-homology (CH) domains span residues aspartate 116–leucine 232, leucine 260–proline 365, threonine 379–valine 488, and proline 501–methionine 608.

In terms of biological role, binds to actin. This is Fimbrin (fimA) from Dictyostelium discoideum (Social amoeba).